A 180-amino-acid chain; its full sequence is Adenine phosphoribosyltransferase (180 aa).

It belongs to the purine/pyrimidine phosphoribosyltransferase family. Homodimer.

It is found in the cytoplasm. The catalysed reaction is AMP + diphosphate = 5-phospho-alpha-D-ribose 1-diphosphate + adenine. It participates in purine metabolism; AMP biosynthesis via salvage pathway; AMP from adenine: step 1/1. Catalyzes a salvage reaction resulting in the formation of AMP, that is energically less costly than de novo synthesis. The sequence is that of Adenine phosphoribosyltransferase from Mycoplasma genitalium (strain ATCC 33530 / DSM 19775 / NCTC 10195 / G37) (Mycoplasmoides genitalium).